A 176-amino-acid chain; its full sequence is ATP-dependent protease subunit HslV (176 aa).

T5 is a catalytic residue. G161, C164, and T167 together coordinate Na(+).

It belongs to the peptidase T1B family. HslV subfamily. In terms of assembly, a double ring-shaped homohexamer of HslV is capped on each side by a ring-shaped HslU homohexamer. The assembly of the HslU/HslV complex is dependent on binding of ATP.

Its subcellular location is the cytoplasm. The enzyme catalyses ATP-dependent cleavage of peptide bonds with broad specificity.. Allosterically activated by HslU binding. In terms of biological role, protease subunit of a proteasome-like degradation complex believed to be a general protein degrading machinery. In Sulfurovum sp. (strain NBC37-1), this protein is ATP-dependent protease subunit HslV.